Consider the following 276-residue polypeptide: MKPMKTSWADEVEADYVDGLPPSKEYTQGNLKFVAEYKYNEDGKKVKVVRTYKIQKQTVPKVVARRRNWSKFGDSLLDKPGPCSQTTMVAEEVHMVFISSKELEQAQAQEPQVEPGKNIARCRICNGEHWSVNCPYKGTSMDSKTLMESKATAAAAAAVSDASKTGKYVSPFLKEGGCAIGGGIGIGAKPWVRERSAVRISNLSESMTEADLEELVKKIGPHTKLYLAREKNTGLCKGFAYVHFKFRQDAAAAIEILNGHGYDHLILCVEWSKPQP.

Positions 196-274 (SAVRISNLSE…LILCVEWSKP (79 aa)) constitute an RRM domain.

This sequence belongs to the eIF-3 subunit G family. As to quaternary structure, component of the eukaryotic translation initiation factor 3 (eIF-3) complex. The eIF-3 complex interacts with pix.

Its subcellular location is the cytoplasm. In terms of biological role, RNA-binding component of the eukaryotic translation initiation factor 3 (eIF-3) complex, which is involved in protein synthesis of a specialized repertoire of mRNAs and, together with other initiation factors, stimulates binding of mRNA and methionyl-tRNAi to the 40S ribosome. The eIF-3 complex specifically targets and initiates translation of a subset of mRNAs involved in cell proliferation. This subunit can bind 18S rRNA. This chain is Eukaryotic translation initiation factor 3 subunit G-2, found in Drosophila persimilis (Fruit fly).